We begin with the raw amino-acid sequence, 392 residues long: Formate-dependent phosphoribosylglycinamide formyltransferase (392 aa).

N(1)-(5-phospho-beta-D-ribosyl)glycinamide is bound by residues Glu-15–Leu-16 and Glu-75. Residues Arg-107, Lys-148, Ser-153–Gln-158, Glu-188–Leu-191, and Glu-196 each bind ATP. The ATP-grasp domain occupies Asp-112 to Leu-302. Residues Glu-261 and Glu-273 each coordinate Mg(2+). N(1)-(5-phospho-beta-D-ribosyl)glycinamide is bound by residues Asp-280, Lys-350, and Arg-357–Arg-358.

The protein belongs to the PurK/PurT family. As to quaternary structure, homodimer.

The enzyme catalyses N(1)-(5-phospho-beta-D-ribosyl)glycinamide + formate + ATP = N(2)-formyl-N(1)-(5-phospho-beta-D-ribosyl)glycinamide + ADP + phosphate + H(+). It functions in the pathway purine metabolism; IMP biosynthesis via de novo pathway; N(2)-formyl-N(1)-(5-phospho-D-ribosyl)glycinamide from N(1)-(5-phospho-D-ribosyl)glycinamide (formate route): step 1/1. Its function is as follows. Involved in the de novo purine biosynthesis. Catalyzes the transfer of formate to 5-phospho-ribosyl-glycinamide (GAR), producing 5-phospho-ribosyl-N-formylglycinamide (FGAR). Formate is provided by PurU via hydrolysis of 10-formyl-tetrahydrofolate. This Prochlorococcus marinus (strain MIT 9303) protein is Formate-dependent phosphoribosylglycinamide formyltransferase.